We begin with the raw amino-acid sequence, 98 residues long: HssA/B-like protein 36 (98 aa).

The disordered stretch occupies residues 1–29; sequence MTLFSSISSISNPMTSSKSSISSFGSGTS.

The protein belongs to the hssA/B family.

This Dictyostelium discoideum (Social amoeba) protein is HssA/B-like protein 36 (hssl36).